Reading from the N-terminus, the 297-residue chain is Homoserine kinase (297 aa).

82-92 (PVSRGLGSSAA) serves as a coordination point for ATP.

It belongs to the GHMP kinase family. Homoserine kinase subfamily.

The protein resides in the cytoplasm. The enzyme catalyses L-homoserine + ATP = O-phospho-L-homoserine + ADP + H(+). It functions in the pathway amino-acid biosynthesis; L-threonine biosynthesis; L-threonine from L-aspartate: step 4/5. Catalyzes the ATP-dependent phosphorylation of L-homoserine to L-homoserine phosphate. The polypeptide is Homoserine kinase (Clostridium botulinum (strain ATCC 19397 / Type A)).